We begin with the raw amino-acid sequence, 191 residues long: dTTP/UTP pyrophosphatase (191 aa).

Asp75 serves as the catalytic Proton acceptor.

The protein belongs to the Maf family. YhdE subfamily. It depends on a divalent metal cation as a cofactor.

The protein resides in the cytoplasm. The catalysed reaction is dTTP + H2O = dTMP + diphosphate + H(+). It carries out the reaction UTP + H2O = UMP + diphosphate + H(+). Nucleoside triphosphate pyrophosphatase that hydrolyzes dTTP and UTP. May have a dual role in cell division arrest and in preventing the incorporation of modified nucleotides into cellular nucleic acids. The protein is dTTP/UTP pyrophosphatase of Aliivibrio fischeri (strain ATCC 700601 / ES114) (Vibrio fischeri).